The following is a 379-amino-acid chain: Glutamate 5-kinase (379 aa).

An ATP-binding site is contributed by Lys15. Residues Ser59, Asp146, and Asn158 each contribute to the substrate site. Residue 178–179 coordinates ATP; that stretch reads TD. Residues 285-363 enclose the PUA domain; it reads RGAVTVDVGA…SEFERLLGYS (79 aa).

It belongs to the glutamate 5-kinase family.

Its subcellular location is the cytoplasm. It catalyses the reaction L-glutamate + ATP = L-glutamyl 5-phosphate + ADP. It participates in amino-acid biosynthesis; L-proline biosynthesis; L-glutamate 5-semialdehyde from L-glutamate: step 1/2. In terms of biological role, catalyzes the transfer of a phosphate group to glutamate to form L-glutamate 5-phosphate. This chain is Glutamate 5-kinase, found in Paracidovorax citrulli (strain AAC00-1) (Acidovorax citrulli).